A 284-amino-acid chain; its full sequence is MKLCDFEVGLDQPFFLIAGTCVVESEQMTIDTAGRLKEICAKLNVPFIYKSSYDKANRSSGKSFRGLGMDEGLRILGEVKRQLGLPVLTDVHSIDEIEQVASVVDVLQTPAFLCRQTDFIHACARSGKPVNIKKGQFLAPHDMKNVIDKARDAAREAGLSEDRFMACERGVSFGYNNLVSDMRSLAIMRETNAPVVFDATHSVQLPGGQGTSSGGQREFVPVLARAAVATGVAGLFMETHPNPAEAKSDGPNAVPLHRMGALLETLVTLDQAVKRNPLLENDFN.

The protein belongs to the KdsA family.

It localises to the cytoplasm. It catalyses the reaction D-arabinose 5-phosphate + phosphoenolpyruvate + H2O = 3-deoxy-alpha-D-manno-2-octulosonate-8-phosphate + phosphate. The protein operates within carbohydrate biosynthesis; 3-deoxy-D-manno-octulosonate biosynthesis; 3-deoxy-D-manno-octulosonate from D-ribulose 5-phosphate: step 2/3. Its pathway is bacterial outer membrane biogenesis; lipopolysaccharide biosynthesis. The chain is 2-dehydro-3-deoxyphosphooctonate aldolase from Burkholderia vietnamiensis (strain G4 / LMG 22486) (Burkholderia cepacia (strain R1808)).